The chain runs to 288 residues: tRNA pseudouridine synthase A (288 aa).

Asp59 serves as the catalytic Nucleophile. Tyr134 is a binding site for substrate.

It belongs to the tRNA pseudouridine synthase TruA family. Homodimer.

The catalysed reaction is uridine(38/39/40) in tRNA = pseudouridine(38/39/40) in tRNA. Functionally, formation of pseudouridine at positions 38, 39 and 40 in the anticodon stem and loop of transfer RNAs. The chain is tRNA pseudouridine synthase A from Leifsonia xyli subsp. xyli (strain CTCB07).